The chain runs to 212 residues: ATP phosphoribosyltransferase (212 aa).

It belongs to the ATP phosphoribosyltransferase family. Short subfamily. As to quaternary structure, heteromultimer composed of HisG and HisZ subunits.

It localises to the cytoplasm. It carries out the reaction 1-(5-phospho-beta-D-ribosyl)-ATP + diphosphate = 5-phospho-alpha-D-ribose 1-diphosphate + ATP. It participates in amino-acid biosynthesis; L-histidine biosynthesis; L-histidine from 5-phospho-alpha-D-ribose 1-diphosphate: step 1/9. Functionally, catalyzes the condensation of ATP and 5-phosphoribose 1-diphosphate to form N'-(5'-phosphoribosyl)-ATP (PR-ATP). Has a crucial role in the pathway because the rate of histidine biosynthesis seems to be controlled primarily by regulation of HisG enzymatic activity. The polypeptide is ATP phosphoribosyltransferase (Prochlorococcus marinus (strain AS9601)).